A 218-amino-acid polypeptide reads, in one-letter code: Small ribosomal subunit protein uS3c (218 aa).

Residues 47–118 (VQKNIRISSG…KLNIAITRIS (72 aa)) form the KH type-2 domain.

This sequence belongs to the universal ribosomal protein uS3 family. As to quaternary structure, part of the 30S ribosomal subunit.

It is found in the plastid. The protein resides in the chloroplast. The sequence is that of Small ribosomal subunit protein uS3c (rps3) from Aethionema cordifolium (Lebanon stonecress).